The following is a 228-amino-acid chain: Derlin-3 (228 aa).

The Cytoplasmic portion of the chain corresponds to 1-22; sequence MAGQRLAAGFLQVPAVTRAYTA. Residues 23-43 form a helical membrane-spanning segment; the sequence is ACVLTTAAVQLELLSPFQLYF. The Lumenal portion of the chain corresponds to 44-57; it reads NPHLVFRKFQVWRL. Residues 58 to 78 traverse the membrane as a helical segment; that stretch reads ITTFLFFGPLGFGFFFNMLFV. Residues 79–98 are Cytoplasmic-facing; that stretch reads FRYCRMLEEGSFRGRKADFV. A helical membrane pass occupies residues 99-119; sequence FMFLFGGVLMTLLGFLGSLFF. Residues 120-168 are Lumenal-facing; sequence LGQALMAMLVYVWSRRSPHVRVNFFGLLNFQAPFLPWALMGFSLLLGNS. Residues 169–189 traverse the membrane as a helical segment; that stretch reads VVTDLLGILVGHIYYFLEDVF. Over 190-228 the chain is Cytoplasmic; sequence PNQPGGKRLLLTPSVLKLLLDDPQEDPDYLPLPEEQPEL.

The protein belongs to the derlin family. In terms of assembly, forms homo- and heterooligomers with DERL2 and, to a lesser extent, with DERL1. Interacts with VCP and EDEM1. Interacts with SELENOK and SELENOS. Interacts with the signal recognition particle/SRP and the SRP receptor; in the process of endoplasmic reticulum stress-induced pre-emptive quality control. In terms of tissue distribution, highly expressed in spleen, lung, liver, spleen and testis. Expressed at intermediate level in kidney. Weakly or not expressed in brain, heart and skeletal muscle.

It is found in the endoplasmic reticulum membrane. In terms of biological role, functional component of endoplasmic reticulum-associated degradation (ERAD) for misfolded lumenal glycoproteins, but not that of misfolded nonglycoproteins. May act by forming a channel that allows the retrotranslocation of misfolded glycoproteins into the cytosol where they are ubiquitinated and degraded by the proteasome. May mediate the interaction between VCP and the misfolded glycoproteins. May be involved in endoplasmic reticulum stress-induced pre-emptive quality control, a mechanism that selectively attenuates the translocation of newly synthesized proteins into the endoplasmic reticulum and reroutes them to the cytosol for proteasomal degradation. The protein is Derlin-3 of Mus musculus (Mouse).